We begin with the raw amino-acid sequence, 437 residues long: GTPase Era, mitochondrial (437 aa).

A mitochondrion-targeting transit peptide spans 1–20; it reads MAAPRRYFPGIVRALLGAWQ. An Era-type G domain is found at 112-330; sequence RVLRVVLLGA…QYLLTQAQPG (219 aa). Positions 120-127 are G1; that stretch reads GAPNAGKS. 120 to 127 provides a ligand contact to GTP; the sequence is GAPNAGKS. The segment at 146–150 is G2; sequence HTTRC. The segment at 167-170 is G3; it reads DTPG. 167–171 is a binding site for GTP; it reads DTPGI. Ser173 carries the phosphoserine modification. GTP is bound at residue 236 to 239; sequence NKVD. Residues 236–239 form a G4 region; the sequence is NKVD. The segment at 272–293 is disordered; it reads SRPSTHCPGPETEDPNTHAVRS. The segment at 308–310 is G5; sequence LSA. Positions 360–437 constitute a KH type-2 domain; sequence LPEEVPYSVQ…LLRLSVKLLK (78 aa).

Belongs to the TRAFAC class TrmE-Era-EngA-EngB-Septin-like GTPase superfamily. Era GTPase family.

The protein resides in the mitochondrion matrix. It is found in the mitochondrion inner membrane. Probable GTPase that plays a role in the mitochondrial ribosomal small subunit assembly. Specifically binds the 12S mitochondrial rRNA (12S mt-rRNA) to a 33 nucleotide section delineating the 3' terminal stem-loop region. May act as a chaperone that protects the 12S mt-rRNA on the 28S mitoribosomal subunit during ribosomal small subunit assembly. This is GTPase Era, mitochondrial (Eral1) from Rattus norvegicus (Rat).